We begin with the raw amino-acid sequence, 152 residues long: Transcriptional regulator MraZ (152 aa).

SpoVT-AbrB domains are found at residues 5–52 (ASAI…PLHE) and 81–124 (AHEV…DEQA).

The protein belongs to the MraZ family. In terms of assembly, forms oligomers.

Its subcellular location is the cytoplasm. The protein localises to the nucleoid. The chain is Transcriptional regulator MraZ from Shewanella sp. (strain MR-7).